Consider the following 217-residue polypeptide: MEDRAGEQEQERHSLRLEKLQHWARHRQSGHLLVLAVSQLWLAVVVVPLAVSVACLNSDCHMATALPLGPGASGLLTGTVTLELRRAPRLWKVRAMMIFNTFNLILGFIVVVVEVMKTALGPAPTASSQHAGLLVLELSAEAFTLGGVLVSVHALFLLSQRKPGCCRSQSLHYQELQEGFSELEEVPGLENGPTVASTGANERVGQREQTRAALLPP.

Helical transmembrane passes span 33–53, 62–82, 96–116, and 138–158; these read LVLA…AVSV, MATA…TVTL, MMIF…VEVM, and LSAE…LFLL. Positions 187 to 217 are disordered; that stretch reads PGLENGPTVASTGANERVGQREQTRAALLPP.

It localises to the membrane. In Homo sapiens (Human), this protein is Transmembrane protein 253 (TMEM253).